A 158-amino-acid chain; its full sequence is Cyclic pyranopterin monophosphate synthase (158 aa).

Residues 75 to 77 (LCH) and 113 to 114 (ME) each bind substrate. Asp128 is an active-site residue.

The protein belongs to the MoaC family. Homohexamer; trimer of dimers.

The enzyme catalyses (8S)-3',8-cyclo-7,8-dihydroguanosine 5'-triphosphate = cyclic pyranopterin phosphate + diphosphate. It participates in cofactor biosynthesis; molybdopterin biosynthesis. Functionally, catalyzes the conversion of (8S)-3',8-cyclo-7,8-dihydroguanosine 5'-triphosphate to cyclic pyranopterin monophosphate (cPMP). This is Cyclic pyranopterin monophosphate synthase from Azorhizobium caulinodans (strain ATCC 43989 / DSM 5975 / JCM 20966 / LMG 6465 / NBRC 14845 / NCIMB 13405 / ORS 571).